The primary structure comprises 138 residues: Small ribosomal subunit protein uS11 (138 aa).

Low complexity predominate over residues 1 to 12; that stretch reads MPPKKANAAGPK. The disordered stretch occupies residues 1–23; the sequence is MPPKKANAAGPKKGQKTRKREKK. Positions 13 to 22 are enriched in basic residues; the sequence is KGQKTRKREK.

Belongs to the universal ribosomal protein uS11 family. Part of the 30S ribosomal subunit. Interacts with proteins S7 and S18. Binds to IF-3.

Functionally, located on the platform of the 30S subunit, it bridges several disparate RNA helices of the 16S rRNA. Forms part of the Shine-Dalgarno cleft in the 70S ribosome. The protein is Small ribosomal subunit protein uS11 of Mycobacterium leprae (strain Br4923).